A 64-amino-acid chain; its full sequence is Translation machinery-associated protein 7B (64 aa).

The tract at residues 1–38 is disordered; that stretch reads MSSHEGGKKKALKQPKKQAKEMDEEEKAFKQKQKEEQK. The span at 27–38 shows a compositional bias: basic and acidic residues; sequence KAFKQKQKEEQK.

This sequence belongs to the TMA7 family.

This chain is Translation machinery-associated protein 7B, found in Homo sapiens (Human).